Consider the following 171-residue polypeptide: Skp-like protein (171 aa).

Positions 1–21 are cleaved as a signal peptide; that stretch reads MKKLLFSTFLLVLGSTSAAHA.

Belongs to the Skp family.

The polypeptide is Skp-like protein (Chlamydia pneumoniae (Chlamydophila pneumoniae)).